Consider the following 269-residue polypeptide: 4-hydroxy-tetrahydrodipicolinate reductase (269 aa).

NAD(+) is bound by residues 10 to 15 (GANGRM), Glu-36, 99 to 101 (GTT), and 123 to 126 (AANF). His-156 functions as the Proton donor/acceptor in the catalytic mechanism. His-157 serves as a coordination point for (S)-2,3,4,5-tetrahydrodipicolinate. The active-site Proton donor is the Lys-160. Residue 166 to 167 (GT) participates in (S)-2,3,4,5-tetrahydrodipicolinate binding.

Belongs to the DapB family.

Its subcellular location is the cytoplasm. It catalyses the reaction (S)-2,3,4,5-tetrahydrodipicolinate + NAD(+) + H2O = (2S,4S)-4-hydroxy-2,3,4,5-tetrahydrodipicolinate + NADH + H(+). The enzyme catalyses (S)-2,3,4,5-tetrahydrodipicolinate + NADP(+) + H2O = (2S,4S)-4-hydroxy-2,3,4,5-tetrahydrodipicolinate + NADPH + H(+). It functions in the pathway amino-acid biosynthesis; L-lysine biosynthesis via DAP pathway; (S)-tetrahydrodipicolinate from L-aspartate: step 4/4. Functionally, catalyzes the conversion of 4-hydroxy-tetrahydrodipicolinate (HTPA) to tetrahydrodipicolinate. The chain is 4-hydroxy-tetrahydrodipicolinate reductase from Neisseria meningitidis serogroup A / serotype 4A (strain DSM 15465 / Z2491).